The chain runs to 350 residues: uncharacterized protein (350 aa).

Positions methionine 1 to asparagine 26 are cleaved as a signal peptide.

This is an uncharacterized protein from Archaeoglobus fulgidus (strain ATCC 49558 / DSM 4304 / JCM 9628 / NBRC 100126 / VC-16).